Here is a 416-residue protein sequence, read N- to C-terminus: Glutamyl-tRNA reductase (416 aa).

Residues T49–R52, S105, E110–Q112, and Q116 contribute to the substrate site. C50 functions as the Nucleophile in the catalytic mechanism. G185–I190 contributes to the NADP(+) binding site.

It belongs to the glutamyl-tRNA reductase family. In terms of assembly, homodimer.

It catalyses the reaction (S)-4-amino-5-oxopentanoate + tRNA(Glu) + NADP(+) = L-glutamyl-tRNA(Glu) + NADPH + H(+). It functions in the pathway porphyrin-containing compound metabolism; protoporphyrin-IX biosynthesis; 5-aminolevulinate from L-glutamyl-tRNA(Glu): step 1/2. Functionally, catalyzes the NADPH-dependent reduction of glutamyl-tRNA(Glu) to glutamate 1-semialdehyde (GSA). In Shewanella denitrificans (strain OS217 / ATCC BAA-1090 / DSM 15013), this protein is Glutamyl-tRNA reductase.